We begin with the raw amino-acid sequence, 446 residues long: Probable arogenate/prephenate dehydrogenase (446 aa).

Positions 6-288 constitute a Prephenate/arogenate dehydrogenase domain; that stretch reads LTISIIGGTD…SEAKRGAYYS (283 aa).

This sequence in the N-terminal section; belongs to the prephenate/arogenate dehydrogenase family.

The protein is Probable arogenate/prephenate dehydrogenase of Methanocaldococcus jannaschii (strain ATCC 43067 / DSM 2661 / JAL-1 / JCM 10045 / NBRC 100440) (Methanococcus jannaschii).